We begin with the raw amino-acid sequence, 223 residues long: Crossover junction endodeoxyribonuclease RuvC (223 aa).

Residues Asp12, Glu73, and Asp146 contribute to the active site. Asp12, Glu73, and Asp146 together coordinate Mg(2+). The disordered stretch occupies residues 182–223 (QGKLGKAKSTLNARNNAQVTGDAQVRAGHPSQFERPDRADPR). Positions 190–202 (STLNARNNAQVTG) are enriched in polar residues. Basic and acidic residues predominate over residues 213–223 (QFERPDRADPR).

This sequence belongs to the RuvC family. Homodimer which binds Holliday junction (HJ) DNA. The HJ becomes 2-fold symmetrical on binding to RuvC with unstacked arms; it has a different conformation from HJ DNA in complex with RuvA. In the full resolvosome a probable DNA-RuvA(4)-RuvB(12)-RuvC(2) complex forms which resolves the HJ. Requires Mg(2+) as cofactor.

Its subcellular location is the cytoplasm. It carries out the reaction Endonucleolytic cleavage at a junction such as a reciprocal single-stranded crossover between two homologous DNA duplexes (Holliday junction).. Its function is as follows. The RuvA-RuvB-RuvC complex processes Holliday junction (HJ) DNA during genetic recombination and DNA repair. Endonuclease that resolves HJ intermediates. Cleaves cruciform DNA by making single-stranded nicks across the HJ at symmetrical positions within the homologous arms, yielding a 5'-phosphate and a 3'-hydroxyl group; requires a central core of homology in the junction. The consensus cleavage sequence is 5'-(A/T)TT(C/G)-3'. Cleavage occurs on the 3'-side of the TT dinucleotide at the point of strand exchange. HJ branch migration catalyzed by RuvA-RuvB allows RuvC to scan DNA until it finds its consensus sequence, where it cleaves and resolves the cruciform DNA. This is Crossover junction endodeoxyribonuclease RuvC from Corynebacterium efficiens (strain DSM 44549 / YS-314 / AJ 12310 / JCM 11189 / NBRC 100395).